The primary structure comprises 93 residues: Cobalt transport protein CbiN (93 aa).

2 helical membrane-spanning segments follow: residues 5-25 and 62-82; these read LILL…DHGG and SLLF…ILGY.

This sequence belongs to the CbiN family. In terms of assembly, forms an energy-coupling factor (ECF) transporter complex composed of an ATP-binding protein (A component, CbiO), a transmembrane protein (T component, CbiQ) and 2 possible substrate-capture proteins (S components, CbiM and CbiN) of unknown stoichimetry.

The protein resides in the cell inner membrane. It functions in the pathway cofactor biosynthesis; adenosylcobalamin biosynthesis. Functionally, part of the energy-coupling factor (ECF) transporter complex CbiMNOQ involved in cobalt import. The sequence is that of Cobalt transport protein CbiN from Citrobacter koseri (strain ATCC BAA-895 / CDC 4225-83 / SGSC4696).